Here is a 58-residue protein sequence, read N- to C-terminus: U11-myrmicitoxin-Tb1a (58 aa).

Residues 1–24 constitute a propeptide that is removed on maturation; the sequence is LAMAMGDAVADAQARAMAAAYAIA. Cysteines 34 and 57 form a disulfide.

The protein belongs to the formicidae venom precursor-01 superfamily. In terms of tissue distribution, expressed by the venom gland.

It localises to the secreted. It is found in the target cell membrane. Neurotoxin that causes irreversible rapid flaccid paralysis in blowflies and honeybees upon intrathoracic injection. Causes a quick and irreversible cytolytic effect (at 10 uM) indicating it possibly acts as a pore-forming peptide. Shows only weak effect on aphids (A.pisum) at high doses 24 hours post intrathoracic injection. In vitro, is not cytotoxic on the dipteran S2 Drosophila embryonic cell line. This Tetramorium bicarinatum (Tramp ant) protein is U11-myrmicitoxin-Tb1a.